A 576-amino-acid polypeptide reads, in one-letter code: KKIGAIAAGSAMVASALATGVFAVEKIGDVEGFKVIDNGEPTADIVVGSTAAAADVVSAANVAAKVGSMMFKEGEAASGSAKLTVKASAESDDANLKSLLTNGTNDFTELDAGKEAFVVAAADSDYSDALINATTGFANIADNVLYDQAKLAAAVSLGDLSTLSVVKDIDPSDWYADKNKAADVATKDYYDQDGDAVEMLMATVASNDDGKSLTVDEDGVLYASIAYDDDNEDFQRATQVLKEGNRLPFLGEEYALVKLDTDDDIVYLGKEVFDGVLKEGDTYNIGDGYELKVVAILKSGDEYKISLQLMKDGKVVAEKFDKVSATSALKMIYTPGNIGIVVNEAWENVGQDYGYGSTLITKDVIALELGEEYIPDWEVVTIEKDTTTDNTKDSKMTLSDDKITKDNTYGIGLQYVGDEEDNFKSGKAIKIAKYAELELDDEDKEDTKLNLFFSMDETKEATLAAGQKVTVLNSDITLSEVMADAKAPVAFKAPLAVLDTEVSLDAANKKLILVGGPVANALTKELADAGKIEMTVESPATLAVVAGAANGNDVLVVAGGDRAATAEAANALIEML.

The first 23 residues, 1–23 (KKIGAIAAGSAMVASALATGVFA), serve as a signal peptide directing secretion. N-linked (GlcNAc...) asparagine glycans are attached at residues asparagine 102 and asparagine 132.

It belongs to the Mj S-layer protein family. Post-translationally, N-linked glycans consist of the 779 Da trisaccharide beta-ManNAc(Thr)-(1-4)-beta-GlcNAc3NAcA-(1-3)-beta-GlcNAc.

Its subcellular location is the secreted. The protein localises to the cell wall. It localises to the S-layer. Functionally, S-layer protein. The S-layer is a paracrystalline mono-layered assembly of proteins which coat the surface of the cell. The polypeptide is S-layer protein (sla) (Methanococcus voltae).